Here is a 163-residue protein sequence, read N- to C-terminus: Endoribonuclease YbeY (163 aa).

Zn(2+)-binding residues include histidine 121, histidine 125, and histidine 131.

It belongs to the endoribonuclease YbeY family. The cofactor is Zn(2+).

The protein localises to the cytoplasm. Single strand-specific metallo-endoribonuclease involved in late-stage 70S ribosome quality control and in maturation of the 3' terminus of the 16S rRNA. This is Endoribonuclease YbeY from Synechococcus sp. (strain JA-2-3B'a(2-13)) (Cyanobacteria bacterium Yellowstone B-Prime).